The following is a 378-amino-acid chain: Ribosomal RNA large subunit methyltransferase G (378 aa).

Belongs to the methyltransferase superfamily. RlmG family.

It localises to the cytoplasm. It carries out the reaction guanosine(1835) in 23S rRNA + S-adenosyl-L-methionine = N(2)-methylguanosine(1835) in 23S rRNA + S-adenosyl-L-homocysteine + H(+). In terms of biological role, specifically methylates the guanine in position 1835 (m2G1835) of 23S rRNA. The polypeptide is Ribosomal RNA large subunit methyltransferase G (Escherichia coli (strain ATCC 8739 / DSM 1576 / NBRC 3972 / NCIMB 8545 / WDCM 00012 / Crooks)).